We begin with the raw amino-acid sequence, 337 residues long: tRNA N6-adenosine threonylcarbamoyltransferase (337 aa).

Residues His-111 and His-115 each coordinate Fe cation. Substrate contacts are provided by residues 134 to 138 (LVSGG), Asp-167, Gly-180, and Asn-272. Residue Asp-300 coordinates Fe cation.

It belongs to the KAE1 / TsaD family. It depends on Fe(2+) as a cofactor.

It localises to the cytoplasm. It catalyses the reaction L-threonylcarbamoyladenylate + adenosine(37) in tRNA = N(6)-L-threonylcarbamoyladenosine(37) in tRNA + AMP + H(+). In terms of biological role, required for the formation of a threonylcarbamoyl group on adenosine at position 37 (t(6)A37) in tRNAs that read codons beginning with adenine. Is involved in the transfer of the threonylcarbamoyl moiety of threonylcarbamoyl-AMP (TC-AMP) to the N6 group of A37, together with TsaE and TsaB. TsaD likely plays a direct catalytic role in this reaction. This is tRNA N6-adenosine threonylcarbamoyltransferase from Escherichia coli (strain SMS-3-5 / SECEC).